Here is a 200-residue protein sequence, read N- to C-terminus: ATP-dependent Clp protease proteolytic subunit 2 (200 aa).

S101 acts as the Nucleophile in catalysis. Residue H126 is part of the active site.

This sequence belongs to the peptidase S14 family. In terms of assembly, fourteen ClpP subunits assemble into 2 heptameric rings which stack back to back to give a disk-like structure with a central cavity, resembling the structure of eukaryotic proteasomes.

Its subcellular location is the cytoplasm. The catalysed reaction is Hydrolysis of proteins to small peptides in the presence of ATP and magnesium. alpha-casein is the usual test substrate. In the absence of ATP, only oligopeptides shorter than five residues are hydrolyzed (such as succinyl-Leu-Tyr-|-NHMec, and Leu-Tyr-Leu-|-Tyr-Trp, in which cleavage of the -Tyr-|-Leu- and -Tyr-|-Trp bonds also occurs).. Functionally, cleaves peptides in various proteins in a process that requires ATP hydrolysis. Has a chymotrypsin-like activity. Plays a major role in the degradation of misfolded proteins. The chain is ATP-dependent Clp protease proteolytic subunit 2 from Prochlorococcus marinus (strain MIT 9313).